The primary structure comprises 335 residues: RVS161-like protein RVS162 (335 aa).

A BAR domain is found at V17–I310. Residues K30 to Y56 adopt a coiled-coil conformation. The disordered stretch occupies residues H105–T127. A compositionally biased stretch (acidic residues) spans E107–D118. Residues T222 to I259 adopt a coiled-coil conformation.

Its subcellular location is the cytoplasm. The protein localises to the cytoskeleton. Its function is as follows. Component of a cytoskeletal structure that is required for membrane curvature. The sequence is that of RVS161-like protein RVS162 from Candida albicans (strain SC5314 / ATCC MYA-2876) (Yeast).